The chain runs to 1004 residues: UPF0182 protein Mflv_4654 (1004 aa).

Transmembrane regions (helical) follow at residues 18–38 (FLIAVSAVLVLLLLLGPRFID), 63–83 (LVIFFVVAILVGAVVFAGLAL), 114–134 (LIGIGVPLAIGVLAGFVGQSY), 176–196 (FVGVFLAFLANLLGHYLFGGI), 211–231 (IQLITLVGLLMLLKAVAYWFD), 260–280 (KLILMAIAVICAVAVFSAIFL), and 288–308 (IGVVLLLLSSLVVGAGWPLVV). The span at 896-940 (PGADATATGPAATEPPAGQAPQTQGNNTAPPAAQPPNRQGQAPAG) shows a compositional bias: low complexity. The segment at 896 to 960 (PGADATATGP…TGPTQLSAAK (65 aa)) is disordered.

It belongs to the UPF0182 family.

It is found in the cell membrane. This chain is UPF0182 protein Mflv_4654, found in Mycolicibacterium gilvum (strain PYR-GCK) (Mycobacterium gilvum (strain PYR-GCK)).